We begin with the raw amino-acid sequence, 412 residues long: Phosphoglycerate kinase (412 aa).

Substrate-binding positions include Asp24 to Asn26, Arg40, His63 to Arg66, Arg122, and Arg162. Residues Lys212, Gly300, Glu331, and Gly360–Ser363 contribute to the ATP site.

The protein belongs to the phosphoglycerate kinase family. In terms of assembly, monomer.

It localises to the cytoplasm. The enzyme catalyses (2R)-3-phosphoglycerate + ATP = (2R)-3-phospho-glyceroyl phosphate + ADP. Its pathway is carbohydrate degradation; glycolysis; pyruvate from D-glyceraldehyde 3-phosphate: step 2/5. In Mycobacterium bovis (strain ATCC BAA-935 / AF2122/97), this protein is Phosphoglycerate kinase (pgk).